The primary structure comprises 205 residues: Hydrogenase-4 component A (205 aa).

4Fe-4S ferredoxin-type domains follow at residues 2–31, 41–72, 73–102, and 140–172; these read NRFV…TQGL, KTST…SQRD, DAIQ…ASGS, and QTVA…LITG. [4Fe-4S] cluster-binding residues include cysteine 12, cysteine 15, cysteine 18, cysteine 22, cysteine 51, cysteine 54, cysteine 59, cysteine 63, cysteine 82, cysteine 85, cysteine 88, cysteine 92, cysteine 146, cysteine 149, cysteine 158, and cysteine 162.

Requires [4Fe-4S] cluster as cofactor.

Functionally, probable electron transfer protein for hydrogenase 4. The sequence is that of Hydrogenase-4 component A from Escherichia coli (strain K12).